The chain runs to 201 residues: uncharacterized protein (201 aa).

This is an uncharacterized protein from Saccharomyces cerevisiae (strain ATCC 204508 / S288c) (Baker's yeast).